Reading from the N-terminus, the 175-residue chain is DASH complex subunit DAM1 (175 aa).

Residues 1–39 form a disordered region; sequence MAPEDTNPQSSHRRTRSTSRSRPTTPLRPSSRSSFRSSA. Residues 20 to 39 show a composition bias toward low complexity; sequence RSRPTTPLRPSSRSSFRSSA.

This sequence belongs to the DASH complex DAM1 family. In terms of assembly, component of the DASH complex consisting of ASK1, DAD1, DAD2, DAD3, DAD4, DAM1, DUO1, HSK3, SPC19 and SPC34, with a stoichiometry of one copy of each subunit per complex. Multiple DASH complexes oligomerize to form a ring that encircles spindle microtubules and organizes the rod-like NDC80 complexes of the outer kinetochore. DASH complex oligomerization strengthens microtubule attachments. On cytoplasmic microtubules, DASH complexes appear to form patches instead of rings.

The protein resides in the chromosome. Its subcellular location is the centromere. The protein localises to the kinetochore. It is found in the cytoplasm. It localises to the cytoskeleton. The protein resides in the spindle. Its subcellular location is the nucleus. Component of the DASH complex that connects microtubules with kinetochores and couples microtubule depolymerisation to chromosome movement; it is involved in retrieving kinetochores to the spindle poles before their re-orientation on the spindle in early mitosis and allows microtubule depolymerization to pull chromosomes apart and resist detachment during anaphase. Kinetochores, consisting of a centromere-associated inner segment and a microtubule-contacting outer segment, play a crucial role in chromosome segregation by mediating the physical connection between centromeric DNA and microtubules. Kinetochores also serve as an input point for the spindle assembly checkpoint, which delays anaphase until all chromosomes have bioriented on the mitotic spindle. The protein is DASH complex subunit DAM1 of Chaetomium thermophilum (strain DSM 1495 / CBS 144.50 / IMI 039719) (Thermochaetoides thermophila).